Reading from the N-terminus, the 119-residue chain is Microtubule nucleation factor SSNA1 (119 aa).

T2 bears the N-acetylthreonine mark. The important for localization to the centrosome stretch occupies residues 2–32 (TQQGAALQNYNNELVKCIEELCQKREELCRQ). The stretch at 13-70 (NELVKCIEELCQKREELCRQIQQEEDEKQRLQNEVRQLTEKLARVNENLARKIASRNE) forms a coiled coil.

It belongs to the SSNA1 family. Self-associates to form fibrils. Also forms dimers as well as monomers. Interacts with SPAST.

It localises to the nucleus. The protein localises to the cytoplasm. The protein resides in the cytoskeleton. It is found in the microtubule organizing center. Its subcellular location is the centrosome. It localises to the centriole. The protein localises to the midbody. The protein resides in the flagellum basal body. It is found in the flagellum axoneme. Its subcellular location is the cell projection. It localises to the axon. In terms of biological role, microtubule-binding protein which stabilizes dynamic microtubules by slowing growth and shrinkage at both plus and minus ends and serves as a sensor of microtubule damage, protecting microtubules from the microtubule-severing enzyme SPAST. Induces microtubule branching which is mediated by the formation of long SSNA1 fibrils which guide microtubule protofilaments to split apart from the mother microtubule and form daughter microtubules. Plays a role in axon outgrowth and branching. Required for cell division. The chain is Microtubule nucleation factor SSNA1 from Mus musculus (Mouse).